A 222-amino-acid chain; its full sequence is MKYPPSLVGLIRELSRLPGIGPKSAQRLAFYLFEQPREDIERLAGAILEAKRDLHTCPVCFNITDAERCDVCSDPTRDQSVICVVEEPGDVIAIERSGEYRGLYHVLHGALSPMNGVGPDRLQIRPLLPRVQDGMEVILATGTTVEGDATALYLQRLLEPLGAVVSRIAYGLPVGGALEYADEVTLGRALSGRRRVSEPASPPPPRRNDEEQDGAPARPPSH.

The C4-type zinc finger occupies 57–72 (CPVCFNITDAERCDVC). In terms of domain architecture, Toprim spans 80 to 173 (SVICVVEEPG…VVSRIAYGLP (94 aa)). The disordered stretch occupies residues 189-222 (ALSGRRRVSEPASPPPPRRNDEEQDGAPARPPSH).

It belongs to the RecR family.

Functionally, may play a role in DNA repair. It seems to be involved in an RecBC-independent recombinational process of DNA repair. It may act with RecF and RecO. The protein is Recombination protein RecR of Deinococcus geothermalis (strain DSM 11300 / CIP 105573 / AG-3a).